The following is a 318-amino-acid chain: Thiohydrolase aneE (318 aa).

It belongs to the polyketide transferase af380 family.

The enzyme catalyses aculene D + L-prolyl-[peptidyl-carrier protein] = aculene B + holo-[peptidyl-carrier protein]. The catalysed reaction is aculene C + L-prolyl-[peptidyl-carrier protein] = aculene A + holo-[peptidyl-carrier protein]. It functions in the pathway secondary metabolite biosynthesis. In terms of biological role, thiohydrolase; part of the gene cluster that mediates the biosynthesis of aculenes, a unique type of norsesquiterpenes that contain a nordaucane skeleton linked to an L-proline moiety and are of mixed biosynthetic origin. The pathway begins with the synthesis of dauca-4,7-diene by the terpene cyclase aneC using farnesyl pyrophosphate (FPP) as substrate. The cytochrome P450 monooxygenase aneF then performs the initial oxidation at C-12 of dauca-4,7-diene to yield asperaculane D. Asperaculane D is substrate of the cytochrome P450 monooxygenase aneD for C-10 hydroxylation to yield asperaculane E. The cytochrome P450 monooxygenase aneG then converts asperaculane E into aculene D via C-2 oxidation. The monomodular nonribosomal peptide synthtase aneB adenylates L-proline and the thiohydrolase aneE transfers this activated L-proline derivative to aculenes D and C to produce respectively aculenes B and A. The dioxygenase aneA converts aculene D into aculene C, and aculene B into aculene A by introducing the 5,6-alkene moiety. Asperculanes A, B, C and F, as well as 14-prolyl asperculane C, might be shunt products of the pathway. The chain is Thiohydrolase aneE from Aspergillus aculeatus (strain ATCC 16872 / CBS 172.66 / WB 5094).